The sequence spans 243 residues: Pyridoxine 5'-phosphate synthase (243 aa).

Residue asparagine 7 participates in 3-amino-2-oxopropyl phosphate binding. 9–10 provides a ligand contact to 1-deoxy-D-xylulose 5-phosphate; it reads DH. Arginine 18 serves as a coordination point for 3-amino-2-oxopropyl phosphate. Histidine 43 acts as the Proton acceptor in catalysis. Residues arginine 45 and histidine 50 each coordinate 1-deoxy-D-xylulose 5-phosphate. The Proton acceptor role is filled by glutamate 70. Threonine 100 lines the 1-deoxy-D-xylulose 5-phosphate pocket. Histidine 192 acts as the Proton donor in catalysis. 3-amino-2-oxopropyl phosphate is bound by residues glycine 193 and 215–216; that span reads GF.

Belongs to the PNP synthase family. In terms of assembly, homooctamer; tetramer of dimers.

The protein localises to the cytoplasm. The enzyme catalyses 3-amino-2-oxopropyl phosphate + 1-deoxy-D-xylulose 5-phosphate = pyridoxine 5'-phosphate + phosphate + 2 H2O + H(+). The protein operates within cofactor biosynthesis; pyridoxine 5'-phosphate biosynthesis; pyridoxine 5'-phosphate from D-erythrose 4-phosphate: step 5/5. Its function is as follows. Catalyzes the complicated ring closure reaction between the two acyclic compounds 1-deoxy-D-xylulose-5-phosphate (DXP) and 3-amino-2-oxopropyl phosphate (1-amino-acetone-3-phosphate or AAP) to form pyridoxine 5'-phosphate (PNP) and inorganic phosphate. The protein is Pyridoxine 5'-phosphate synthase of Salinibacter ruber (strain DSM 13855 / M31).